A 701-amino-acid chain; its full sequence is UvrABC system protein B (701 aa).

Residues 35 to 422 enclose the Helicase ATP-binding domain; the sequence is RRIQGGAADT…GGDVVEQVIR (388 aa). ATP is bound at residue 48-55; the sequence is GATGTGKT. Positions 101–124 match the Beta-hairpin motif; that stretch reads YYDYYQPEAYVPQTDTYIEKDSSI. The region spanning 439-605 is the Helicase C-terminal domain; the sequence is QIDDLVHEIR…PLRKKIADIL (167 aa). The tract at residues 620–648 is disordered; the sequence is ARSRGEKRGTPTPRSGALSGPDRVAEQAK. One can recognise a UVR domain in the interval 656 to 691; it reads AALVEQLTEQMHQAAADLQFELAARLRDEIKELKRE.

The protein belongs to the UvrB family. In terms of assembly, forms a heterotetramer with UvrA during the search for lesions. Interacts with UvrC in an incision complex.

The protein resides in the cytoplasm. Its function is as follows. The UvrABC repair system catalyzes the recognition and processing of DNA lesions. A damage recognition complex composed of 2 UvrA and 2 UvrB subunits scans DNA for abnormalities. Upon binding of the UvrA(2)B(2) complex to a putative damaged site, the DNA wraps around one UvrB monomer. DNA wrap is dependent on ATP binding by UvrB and probably causes local melting of the DNA helix, facilitating insertion of UvrB beta-hairpin between the DNA strands. Then UvrB probes one DNA strand for the presence of a lesion. If a lesion is found the UvrA subunits dissociate and the UvrB-DNA preincision complex is formed. This complex is subsequently bound by UvrC and the second UvrB is released. If no lesion is found, the DNA wraps around the other UvrB subunit that will check the other stand for damage. The protein is UvrABC system protein B of Thermobifida fusca (strain YX).